A 93-amino-acid polypeptide reads, in one-letter code: Neutrophil cationic peptide 2 (93 aa).

A signal peptide spans 1–19 (MRTVPLFAACLLLTLMAQA). Residues 20-62 (EPLPRAADHSDTKMKGDREDHVAVISFWEEESTSLQDAGAGAG) constitute a propeptide that is removed on maturation. 3 cysteine pairs are disulfide-bonded: Cys65/Cys93, Cys67/Cys82, and Cys72/Cys92.

Belongs to the alpha-defensin family.

Its subcellular location is the secreted. Its function is as follows. Has antibiotic, anti-fungi and antiviral activity. This chain is Neutrophil cationic peptide 2, found in Cavia porcellus (Guinea pig).